Reading from the N-terminus, the 550-residue chain is Hydroxylamine reductase (550 aa).

4 residues coordinate [2Fe-2S] cluster: Cys-3, Cys-6, Cys-18, and Cys-25. Hybrid [4Fe-2O-2S] cluster-binding residues include His-249, Glu-273, Cys-317, Cys-405, Cys-433, Cys-458, Glu-492, and Lys-494. Cys-405 carries the post-translational modification Cysteine persulfide.

The protein belongs to the HCP family. [2Fe-2S] cluster is required as a cofactor. It depends on hybrid [4Fe-2O-2S] cluster as a cofactor.

It is found in the cytoplasm. It catalyses the reaction A + NH4(+) + H2O = hydroxylamine + AH2 + H(+). Its function is as follows. Catalyzes the reduction of hydroxylamine to form NH(3) and H(2)O. The sequence is that of Hydroxylamine reductase from Shigella flexneri serotype 5b (strain 8401).